Reading from the N-terminus, the 598-residue chain is Nitrate/nitrite sensor protein NarX (598 aa).

The Cytoplasmic portion of the chain corresponds to 1–14 (MLKRCLSPLTLVNQ). The chain crosses the membrane as a helical span at residues 15-37 (VALIVLLSTAIGLAGMAVSGWLV). At 38–151 (QGVQGSAHAI…DRTTEMRIET (114 aa)) the chain is on the periplasmic side. Residues 152–174 (VVLVHRVMAVFMALLLVFTIIWL) traverse the membrane as a helical segment. At 175–598 (RARLLQPWRQ…FTDVQGDTHE (424 aa)) the chain is on the cytoplasmic side. Residues 176–228 (ARLLQPWRQLLAMASAVSHRDFTQRANISGRNEMAMLGTALNNMSAELAESYA) form the HAMP domain. Positions 393 to 587 (TIARELHDSI…EVVVTFIPEK (195 aa)) constitute a Histidine kinase domain. His-399 carries the phosphohistidine; by autocatalysis modification.

The protein resides in the cell inner membrane. It catalyses the reaction ATP + protein L-histidine = ADP + protein N-phospho-L-histidine.. Its function is as follows. Acts as a sensor for nitrate/nitrite and transduces signal of nitrate availability to the NarL protein and of both nitrate/nitrite to the NarP protein. NarX probably activates NarL and NarP by phosphorylation in the presence of nitrate. NarX also plays a negative role in controlling NarL activity, probably through dephosphorylation in the absence of nitrate. This chain is Nitrate/nitrite sensor protein NarX (narX), found in Escherichia coli O157:H7.